The primary structure comprises 334 residues: Malate dehydrogenase 2 (334 aa).

An NAD(+)-binding site is contributed by 19–25 (IGAGKVG). Substrate contacts are provided by R100 and R106. NAD(+) is bound by residues N113 and 136–138 (VSN). Substrate is bound by residues N138 and R169. The Proton acceptor role is filled by H193.

Belongs to the LDH/MDH superfamily.

The enzyme catalyses (S)-malate + NAD(+) = oxaloacetate + NADH + H(+). Functionally, catalyzes the reversible oxidation of malate to oxaloacetate. In Aquifex aeolicus (strain VF5), this protein is Malate dehydrogenase 2.